Here is a 247-residue protein sequence, read N- to C-terminus: ATP synthase subunit a, chloroplastic (247 aa).

5 helical membrane-spanning segments follow: residues Q38–V58, V95–L115, I134–T154, L199–L219, and G220–G240.

This sequence belongs to the ATPase A chain family. In terms of assembly, F-type ATPases have 2 components, CF(1) - the catalytic core - and CF(0) - the membrane proton channel. CF(1) has five subunits: alpha(3), beta(3), gamma(1), delta(1), epsilon(1). CF(0) has four main subunits: a, b, b' and c.

The protein resides in the plastid. It is found in the chloroplast thylakoid membrane. Functionally, key component of the proton channel; it plays a direct role in the translocation of protons across the membrane. In Eucalyptus globulus subsp. globulus (Tasmanian blue gum), this protein is ATP synthase subunit a, chloroplastic.